The following is a 146-amino-acid chain: Copper transporter 5 (146 aa).

Residues W24–L44 traverse the membrane as a helical segment. Residues S55–L74 are disordered. A helical transmembrane segment spans residues L101–L121.

Belongs to the copper transporter (Ctr) (TC 1.A.56) family. SLC31A subfamily. Highly expressed in leaves and stems and at lower levels in roots and flowers.

The protein localises to the membrane. Involved in the transport of copper. The sequence is that of Copper transporter 5 (COPT5) from Arabidopsis thaliana (Mouse-ear cress).